The sequence spans 789 residues: MTKPAADASAVLTAEDTLVLASTATPVEMELIMGWLGQQRARHPDSKFDILKLPPRNAPPAALTALVEQLEPGFASSPQSGEDRSIVPVRVIWLPPADRSRAGKVAALLPGRDPYHPSQRQQRRILRTDPRRARVVAGESAKVSELRQQWRDTTVAEHKRDFAQFVSRRALLALARAEYRILGPQYKSPRLVKPEMLASARFRAGLDRIPGATVEDAGKMLDELSTGWSQVSVDLVSVLGRLASRGFDPEFDYDEYQVAAMRAALEAHPAVLLFSHRSYIDGVVVPVAMQDNRLPPVHMFGGINLSFGLMGPLMRRSGMIFIRRNIGNDPLYKYVLKEYVGYVVEKRFNLSWSIEGTRSRTGKMLPPKLGLMSYVADAYLDGRSDDILLQGVSICFDQLHEITEYAAYARGAEKTPEGLRWLYNFIKAQGERNFGKIYVRFPEAVSMRQYLGAPHGELTQDPAAKRLALQKMSFEVAWRILQATPVTATGLVSALLLTTRGTALTLDQLHHTLQDSLDYLERKQSPVSTSALRLRSREGVRAAADALSNGHPVTRVDSGREPVWYIAPDDEHAAAFYRNSVIHAFLETSIVELALAHAKHAEGDRVAAFWAQAMRLRDLLKFDFYFADSTAFRANIAQEMAWHQDWEDHLGVGGNEIDAMLYAKRPLMSDAMLRVFFEAYEIVADVLRDAPPDIGPEELTELALGLGRQFVAQGRVRSSEPVSTLLFATARQVAVDQELIAPAADLAERRVAFRRELRNILRDFDYVEQIARNQFVACEFKARQGRDRI.

The HXXXXD motif motif lies at 275–280; that stretch reads SHRSYI.

The protein belongs to the GPAT/DAPAT family.

Its subcellular location is the cell membrane. It catalyses the reaction sn-glycerol 3-phosphate + an acyl-CoA = a 1-acyl-sn-glycero-3-phosphate + CoA. It functions in the pathway phospholipid metabolism; CDP-diacylglycerol biosynthesis; CDP-diacylglycerol from sn-glycerol 3-phosphate: step 1/3. This Mycobacterium tuberculosis (strain ATCC 25177 / H37Ra) protein is Glycerol-3-phosphate acyltransferase.